Here is a 294-residue protein sequence, read N- to C-terminus: Elongation factor Ts (294 aa).

The tract at residues 80–83 (TDFV) is involved in Mg(2+) ion dislocation from EF-Tu.

The protein belongs to the EF-Ts family.

The protein localises to the cytoplasm. Its function is as follows. Associates with the EF-Tu.GDP complex and induces the exchange of GDP to GTP. It remains bound to the aminoacyl-tRNA.EF-Tu.GTP complex up to the GTP hydrolysis stage on the ribosome. The protein is Elongation factor Ts of Polynucleobacter necessarius subsp. necessarius (strain STIR1).